Here is a 208-residue protein sequence, read N- to C-terminus: Protein-L-isoaspartate O-methyltransferase (208 aa).

The active site involves Ser-59.

Belongs to the methyltransferase superfamily. L-isoaspartyl/D-aspartyl protein methyltransferase family.

It localises to the cytoplasm. It catalyses the reaction [protein]-L-isoaspartate + S-adenosyl-L-methionine = [protein]-L-isoaspartate alpha-methyl ester + S-adenosyl-L-homocysteine. Functionally, catalyzes the methyl esterification of L-isoaspartyl residues in peptides and proteins that result from spontaneous decomposition of normal L-aspartyl and L-asparaginyl residues. It plays a role in the repair and/or degradation of damaged proteins. The protein is Protein-L-isoaspartate O-methyltransferase of Erwinia tasmaniensis (strain DSM 17950 / CFBP 7177 / CIP 109463 / NCPPB 4357 / Et1/99).